The sequence spans 265 residues: Hydroxyethylthiazole kinase (265 aa).

M43 is a substrate binding site. ATP contacts are provided by R119 and S165. A192 contacts substrate.

The protein belongs to the Thz kinase family. Mg(2+) is required as a cofactor.

The enzyme catalyses 5-(2-hydroxyethyl)-4-methylthiazole + ATP = 4-methyl-5-(2-phosphooxyethyl)-thiazole + ADP + H(+). It functions in the pathway cofactor biosynthesis; thiamine diphosphate biosynthesis; 4-methyl-5-(2-phosphoethyl)-thiazole from 5-(2-hydroxyethyl)-4-methylthiazole: step 1/1. Its function is as follows. Catalyzes the phosphorylation of the hydroxyl group of 4-methyl-5-beta-hydroxyethylthiazole (THZ). The sequence is that of Hydroxyethylthiazole kinase from Haemophilus influenzae (strain 86-028NP).